A 407-amino-acid chain; its full sequence is WEB family protein At3g51720 (407 aa).

Coiled coils occupy residues 72 to 99 (KVLK…DKEN), 128 to 217 (SVGL…ARAA), and 247 to 278 (EEIL…EAEE).

It belongs to the WEB family.

This Arabidopsis thaliana (Mouse-ear cress) protein is WEB family protein At3g51720.